The primary structure comprises 321 residues: Cytochrome c biogenesis protein CcsA (321 aa).

Helical transmembrane passes span 17 to 37 (VVSI…IIGL), 46 to 63 (MTTF…WIYL), 71 to 91 (LYES…VPYF), 98 to 118 (LKAI…SGLL), 143 to 163 (MVLG…LLVI), 225 to 245 (IISL…VWAN), 259 to 273 (TWAF…IYLH), and 286 to 306 (AIVA…VNLL).

This sequence belongs to the CcmF/CycK/Ccl1/NrfE/CcsA family. As to quaternary structure, may interact with Ccs1.

The protein localises to the plastid. The protein resides in the chloroplast thylakoid membrane. In terms of biological role, required during biogenesis of c-type cytochromes (cytochrome c6 and cytochrome f) at the step of heme attachment. This chain is Cytochrome c biogenesis protein CcsA, found in Morus indica (Mulberry).